The chain runs to 83 residues: Large ribosomal subunit protein bL27c (83 aa).

A disordered region spans residues 1–21 (MAHKKGAGSTKNGRDSNAKRL).

It belongs to the bacterial ribosomal protein bL27 family.

The protein localises to the plastid. It localises to the chloroplast. The polypeptide is Large ribosomal subunit protein bL27c (Phaeodactylum tricornutum (strain CCAP 1055/1)).